We begin with the raw amino-acid sequence, 389 residues long: 23S rRNA (uracil(747)-C(5))-methyltransferase RlmC (389 aa).

Cysteine 12, cysteine 20, cysteine 23, and cysteine 99 together coordinate [4Fe-4S] cluster. Residues glutamine 224, phenylalanine 253, glutamate 274, and asparagine 321 each contribute to the S-adenosyl-L-methionine site. Cysteine 348 functions as the Nucleophile in the catalytic mechanism.

It belongs to the class I-like SAM-binding methyltransferase superfamily. RNA M5U methyltransferase family. RlmC subfamily.

It carries out the reaction uridine(747) in 23S rRNA + S-adenosyl-L-methionine = 5-methyluridine(747) in 23S rRNA + S-adenosyl-L-homocysteine + H(+). In terms of biological role, catalyzes the formation of 5-methyl-uridine at position 747 (m5U747) in 23S rRNA. This chain is 23S rRNA (uracil(747)-C(5))-methyltransferase RlmC, found in Shewanella putrefaciens (strain CN-32 / ATCC BAA-453).